We begin with the raw amino-acid sequence, 619 residues long: DNA mismatch repair protein MutL (619 aa).

Belongs to the DNA mismatch repair MutL/HexB family.

Functionally, this protein is involved in the repair of mismatches in DNA. It is required for dam-dependent methyl-directed DNA mismatch repair. May act as a 'molecular matchmaker', a protein that promotes the formation of a stable complex between two or more DNA-binding proteins in an ATP-dependent manner without itself being part of a final effector complex. The polypeptide is DNA mismatch repair protein MutL (Myxococcus xanthus (strain DK1622)).